A 638-amino-acid polypeptide reads, in one-letter code: Exotoxin A (638 aa).

The first 25 residues, 1–25 (MHLTPHWIPLVASLGLLAGGSFASA), serve as a signal peptide directing secretion. Residues 26–277 (AEEAFDLWNE…VISHRLHFPE (252 aa)) are domain Ia (required for target cell recognition). An II (required for translocation in target cell cytoplasm) region spans residues 278 to 389 (GGSLAALTAH…TGNDEAGAAS (112 aa)). An intrachain disulfide couples C290 to C312. Residues 390 to 429 (ADVVSLTCPVAAGECAGPADSGDALLERNYPTGAEFLGDG) are domain Ib. The III (required for ADP-ribosyl activity) stretch occupies residues 430–638 (GDISFSTRGT…PGKPPREDLK (209 aa)). Residues 465–467 (HGT), S474, 479–485 (GVRARSQ), and E578 each bind NAD(+). E578 is a catalytic residue. The interval 596–638 (IPTDPRNVGGDLDPSSIPDKEQAISALPDYASQPGKPPREDLK) is disordered.

In terms of processing, the 8 cysteines participate in intrachain disulfide bonds.

It carries out the reaction diphthamide-[translation elongation factor 2] + NAD(+) = N-(ADP-D-ribosyl)diphthamide-[translation elongation factor 2] + nicotinamide + H(+). Its activity is regulated as follows. Inhibited by 1,8-naphthalimide (NAP) as well as a number of poly(ADP-ribose) polymerase inhibitors and other compounds. Functionally, an NAD-dependent ADP-ribosyltransferase (ADPRT). Catalyzes the transfer of the ADP ribosyl moiety of oxidized NAD (NAD(+)) onto eukaryotic elongation factor 2 (eEF-2) thus arresting protein synthesis. Has an LD(50) of 65 ng/ml against the human lung epithelial cell line C38. The polypeptide is Exotoxin A (Pseudomonas aeruginosa (strain ATCC 15692 / DSM 22644 / CIP 104116 / JCM 14847 / LMG 12228 / 1C / PRS 101 / PAO1)).